Consider the following 136-residue polypeptide: Small ribosomal subunit protein uS8c (136 aa).

This sequence belongs to the universal ribosomal protein uS8 family. Part of the 30S ribosomal subunit.

It is found in the plastid. It localises to the chloroplast. One of the primary rRNA binding proteins, it binds directly to 16S rRNA central domain where it helps coordinate assembly of the platform of the 30S subunit. The protein is Small ribosomal subunit protein uS8c (rps8) of Saccharum hybrid (Sugarcane).